The chain runs to 463 residues: Regulator of microtubule dynamics protein 3 (463 aa).

The Mitochondrial intermembrane segment spans residues 1–4 (MSKL). The chain crosses the membrane as a helical span at residues 5 to 27 (ILSYRIGLGLVVGAAAGAVIYIV). Residues 28–463 (FRRNRKKTRK…PATAEEELLV (436 aa)) lie on the Cytoplasmic side of the membrane. An FFAT motif is present at residues 146–161 (IYFTATSGAAHTDAES). Residues 153–192 (GAAHTDAESEGGYSTAYAESDFERESSRASEAEEEDEVSC) are disordered. Residues 173–183 (DFERESSRASE) are compositionally biased toward basic and acidic residues. Residues 279 to 302 (AEDAQEKKSFASEGKEEAEAALQK) are a coiled coil.

This sequence belongs to the RMDN family. Interacts with PTPN2. Interacts with microtubules. Interacts with VAPB. Interacts (FFAT motif) with MOSPD2 (via MSP domain).

Its subcellular location is the mitochondrion outer membrane. It localises to the cytoplasm. It is found in the nucleus. The protein resides in the cytoskeleton. The protein localises to the spindle. Its subcellular location is the spindle pole. Its function is as follows. Involved in cellular calcium homeostasis regulation. In Xenopus laevis (African clawed frog), this protein is Regulator of microtubule dynamics protein 3 (rmdn3).